Consider the following 59-residue polypeptide: Protein ORF5a (59 aa).

The helical; Signal-anchor for type III membrane protein transmembrane segment at 13–33 threads the bilayer; it reads VIYDCIAILALGCAITCLLLI.

Its subcellular location is the membrane. This is Protein ORF5a (GP5) from Equine arteritis virus (strain Bucyrus) (EAV).